The following is a 355-amino-acid chain: MGTKGLPLYPDPSRVPGTKTQNNLESDYLARDGPSSNSSFHSSEEEGTDLEGDMLDCSGSRPLLMESEEEDESCRPPPGKLGGAVPFAPPEVSPEQAKTVQGGRKNQFQAFTQPATDGLSEPDVFAIAPFRSSRVPNDDMDIFSKAPFVSKSSMAPSQPEESDVFLRAPFTKKKSMEELTVIQCTSQELPAQTGLLSQTGDVPLPAGRERAVYTSVQAQYSTAGFVQQSNLLSHSVQAADHLDSISPRGSCLESGGHSNDRNKGPQLQKEAVSGPMAGKPFRPQSLSKYSRHYSPEDEPSPEAQPIAAYKIVSQTNKQSIAGSVSITSLSSRTTELPAADPFALAPFPSKSGKKP.

The disordered stretch occupies residues 1–104; the sequence is MGTKGLPLYP…EQAKTVQGGR (104 aa). Lys-19 carries the post-translational modification N6-acetyllysine. Acidic residues predominate over residues 45 to 54; the sequence is EEGTDLEGDM. Ser-175 is subject to Phosphoserine. Disordered regions lie at residues 247 to 310 and 325 to 355; these read PRGS…AAYK and SITSLSSRTTELPAADPFALAPFPSKSGKKP. Tyr-293 bears the Phosphotyrosine mark. Ser-294 carries the post-translational modification Phosphoserine. A compositionally biased stretch (polar residues) spans 325–334; it reads SITSLSSRTT. Over residues 336–348 the composition is skewed to low complexity; it reads LPAADPFALAPFP.

This is an uncharacterized protein from Homo sapiens (Human).